Here is a 223-residue protein sequence, read N- to C-terminus: Phosphoribosylformylglycinamidine synthase subunit PurQ (223 aa).

In terms of domain architecture, Glutamine amidotransferase type-1 spans 3 to 223; that stretch reads SAVVQLPGLN…FASALDVIAA (221 aa). Cys86 (nucleophile) is an active-site residue. Residues His196 and Glu198 contribute to the active site.

Part of the FGAM synthase complex composed of 1 PurL, 1 PurQ and 2 PurS subunits.

It is found in the cytoplasm. The enzyme catalyses N(2)-formyl-N(1)-(5-phospho-beta-D-ribosyl)glycinamide + L-glutamine + ATP + H2O = 2-formamido-N(1)-(5-O-phospho-beta-D-ribosyl)acetamidine + L-glutamate + ADP + phosphate + H(+). It catalyses the reaction L-glutamine + H2O = L-glutamate + NH4(+). Its pathway is purine metabolism; IMP biosynthesis via de novo pathway; 5-amino-1-(5-phospho-D-ribosyl)imidazole from N(2)-formyl-N(1)-(5-phospho-D-ribosyl)glycinamide: step 1/2. Functionally, part of the phosphoribosylformylglycinamidine synthase complex involved in the purines biosynthetic pathway. Catalyzes the ATP-dependent conversion of formylglycinamide ribonucleotide (FGAR) and glutamine to yield formylglycinamidine ribonucleotide (FGAM) and glutamate. The FGAM synthase complex is composed of three subunits. PurQ produces an ammonia molecule by converting glutamine to glutamate. PurL transfers the ammonia molecule to FGAR to form FGAM in an ATP-dependent manner. PurS interacts with PurQ and PurL and is thought to assist in the transfer of the ammonia molecule from PurQ to PurL. The polypeptide is Phosphoribosylformylglycinamidine synthase subunit PurQ (Rhizobium meliloti (strain 1021) (Ensifer meliloti)).